Consider the following 366-residue polypeptide: Putative zinc metalloprotease slr1821 (366 aa).

H20 serves as a coordination point for Zn(2+). Residue E21 is part of the active site. H24 lines the Zn(2+) pocket. 3 helical membrane passes run 95–115, 293–313, and 325–345; these read AIVI…LLIG, AVIN…FLLI, and FQMG…VFLI. Positions 106–188 constitute a PDZ domain; sequence LVFAYFLLIG…VPITVEVQRG (83 aa).

It belongs to the peptidase M50B family. The cofactor is Zn(2+).

The protein localises to the cell inner membrane. The protein is Putative zinc metalloprotease slr1821 of Synechocystis sp. (strain ATCC 27184 / PCC 6803 / Kazusa).